The sequence spans 121 residues: Large ribosomal subunit protein bL20 (121 aa).

The protein belongs to the bacterial ribosomal protein bL20 family.

Its function is as follows. Binds directly to 23S ribosomal RNA and is necessary for the in vitro assembly process of the 50S ribosomal subunit. It is not involved in the protein synthesizing functions of that subunit. This chain is Large ribosomal subunit protein bL20, found in Ruegeria sp. (strain TM1040) (Silicibacter sp.).